A 193-amino-acid chain; its full sequence is Ribosome maturation factor RimM (193 aa).

A PRC barrel domain is found at 100-173; sequence DDEFYYADLE…TLLIDPLAAG (74 aa).

It belongs to the RimM family. In terms of assembly, binds ribosomal protein uS19.

Its subcellular location is the cytoplasm. In terms of biological role, an accessory protein needed during the final step in the assembly of 30S ribosomal subunit, possibly for assembly of the head region. Essential for efficient processing of 16S rRNA. May be needed both before and after RbfA during the maturation of 16S rRNA. It has affinity for free ribosomal 30S subunits but not for 70S ribosomes. The polypeptide is Ribosome maturation factor RimM (Rhizobium etli (strain CIAT 652)).